The sequence spans 535 residues: Peptide chain release factor 3 (535 aa).

The tr-type G domain maps to 8-278; it reads ARRRTFAIIS…VDQAPAPGPR (271 aa). Residues 17 to 24, 85 to 89, and 139 to 142 each bind GTP; these read SHPDAGKT, DTPGH, and NKLD.

It belongs to the TRAFAC class translation factor GTPase superfamily. Classic translation factor GTPase family. PrfC subfamily.

It is found in the cytoplasm. Its function is as follows. Increases the formation of ribosomal termination complexes and stimulates activities of RF-1 and RF-2. It binds guanine nucleotides and has strong preference for UGA stop codons. It may interact directly with the ribosome. The stimulation of RF-1 and RF-2 is significantly reduced by GTP and GDP, but not by GMP. The chain is Peptide chain release factor 3 from Bordetella bronchiseptica (strain ATCC BAA-588 / NCTC 13252 / RB50) (Alcaligenes bronchisepticus).